The sequence spans 418 residues: Trans-acting enoyl reductase (418 aa).

Belongs to the saccharopine dehydrogenase family. Enoyl reductase subfamily.

Its function is as follows. Involved in the reduction of the double bond between C-4 and C-5 during phthiocerol dimycocerosates (DIM A) and glycosylated phenolphthiocerol dimycocerosates (PGL) biosynthesis. This is Trans-acting enoyl reductase from Mycobacterium ulcerans (strain Agy99).